The chain runs to 313 residues: E3 ubiquitin-protein ligase RNF126 (313 aa).

Ala2 carries the N-acetylalanine modification. Phosphoserine is present on Ser5. The segment at 5 to 101 (SPQPGRYFCH…FEIPTFPPGA (97 aa)) is required for interaction with BAG6. Zn(2+) is bound by residues Cys13, Cys16, Cys29, and Cys32. The C4-type zinc-finger motif lies at 13–32 (CHCCSVEIVPRLPDYICPRC). Disordered stretches follow at residues 42–64 (EETRSAENGSAPSTASADQSRQQ) and 96–128 (TFPPGAQADDSRDPESRREREQHSRHRYGARQP). Positions 47–64 (AENGSAPSTASADQSRQQ) are enriched in polar residues. Residues 104 to 117 (DDSRDPESRREREQ) show a composition bias toward basic and acidic residues. Basic residues predominate over residues 118-128 (HSRHRYGARQP). The interval 203-306 (TGPPPADKEK…SSSSSSSPGN (104 aa)) is sufficient for interaction with AICDA. An RING-type zinc finger spans residues 232–273 (CPVCKDDYGLGEHVRQLPCNHLFHDGCIVPWLEQHDSCPVCR). The disordered stretch occupies residues 280–313 (NTATDPPGLAGVSFSSSSSSSSSSPGNENPASSS). Residues 292–313 (SFSSSSSSSSSSPGNENPASSS) show a composition bias toward low complexity.

Interacts with CCDC50, EGFR, FLT3 and SCAMP3. Interacts with BAG6 (via ubiquitin-like domain); required for BAG6-dependent ubiquitination of proteins mislocalized to the cytosol. Interacts with CDKN1A. Interacts with AICDA. Post-translationally, ubiquitinated. May undergo autoubiquitination.

It is found in the cytoplasm. The protein resides in the nucleus. It carries out the reaction S-ubiquitinyl-[E2 ubiquitin-conjugating enzyme]-L-cysteine + [acceptor protein]-L-lysine = [E2 ubiquitin-conjugating enzyme]-L-cysteine + N(6)-ubiquitinyl-[acceptor protein]-L-lysine.. The protein operates within protein modification; protein ubiquitination. In terms of biological role, E3 ubiquitin-protein ligase that mediates ubiquitination oF target proteins. Depending on the associated E2 ligase, mediates 'Lys-27'-, 'Lys-29'-, 'Lys-48'- and/or 'Lys-63'-linked polyubiquitination of substrates. Part of a BAG6-dependent quality control process ensuring that proteins of the secretory pathway that are mislocalized to the cytosol are degraded by the proteasome. Probably acts by providing the ubiquitin ligase activity associated with the BAG6 complex and be responsible for ubiquitination of the hydrophobic mislocalized proteins and their targeting to the proteasome. May also play a role in the endosomal recycling of IGF2R, the cation-independent mannose-6-phosphate receptor. May play a role in the endosomal sorting and degradation of several membrane receptors including EGFR, FLT3, MET and CXCR4, by mediating their ubiquitination. By ubiquitinating CDKN1A/p21 and targeting it for degradation, may also promote cell proliferation. May monoubiquitinate AICDA. Acts as a regulator of DNA repair by mediating 'Lys-27'- and 'Lys-29'-linked polyubiquitination of MRE11, thereby promoting the exonuclease activity of MRE11. The polypeptide is E3 ubiquitin-protein ligase RNF126 (Bos taurus (Bovine)).